The chain runs to 105 residues: uncharacterized protein (105 aa).

The first 19 residues, 1 to 19 (MKLVFIFATAAIMGVVVYG), serve as a signal peptide directing secretion.

This is an uncharacterized protein from Magallana gigas (Pacific oyster).